Consider the following 444-residue polypeptide: Adenylosuccinate synthetase (444 aa).

GTP contacts are provided by residues 12–18 and 40–42; these read GDEGKGK and GHT. Aspartate 13 functions as the Proton acceptor in the catalytic mechanism. Mg(2+)-binding residues include aspartate 13 and glycine 40. IMP is bound by residues 13–16, 38–41, threonine 128, arginine 142, glutamine 223, threonine 238, and arginine 302; these read DEGK and NAGH. Residue histidine 41 is the Proton donor of the active site. 298–304 contributes to the substrate binding site; the sequence is TTTGRRR. GTP-binding positions include arginine 304, 330-332, and 412-414; these read KLD and SLG.

It belongs to the adenylosuccinate synthetase family. Homodimer. Mg(2+) is required as a cofactor.

The protein resides in the cytoplasm. The enzyme catalyses IMP + L-aspartate + GTP = N(6)-(1,2-dicarboxyethyl)-AMP + GDP + phosphate + 2 H(+). The protein operates within purine metabolism; AMP biosynthesis via de novo pathway; AMP from IMP: step 1/2. Functionally, plays an important role in the de novo pathway of purine nucleotide biosynthesis. Catalyzes the first committed step in the biosynthesis of AMP from IMP. This chain is Adenylosuccinate synthetase, found in Synechococcus elongatus (strain ATCC 33912 / PCC 7942 / FACHB-805) (Anacystis nidulans R2).